The chain runs to 68 residues: Copper transport protein ATOX1 (68 aa).

One can recognise an HMA domain in the interval 1 to 63; it reads MPKHEFSVDM…TLNKTGKAVS (63 aa). Residues cysteine 12 and cysteine 15 each contribute to the Cu cation site. At serine 47 the chain carries Phosphoserine. At lysine 60 the chain carries N6-acetyllysine.

The protein belongs to the ATX1 family. Homodimer. Interacts with ATP7B. Interacts with ATP7A. Interacts (via dimer form) with SLC31A1 (via C-terminal domain); this interaction improves ATOX1 stability and controls intracellular Cu(I) levels.

Functionally, binds and deliver cytosolic copper to the copper ATPase proteins. May be important in cellular antioxidant defense. The polypeptide is Copper transport protein ATOX1 (Mus musculus (Mouse)).